The chain runs to 129 residues: Small ribosomal subunit protein uS11 (129 aa).

It belongs to the universal ribosomal protein uS11 family. Part of the 30S ribosomal subunit. Interacts with proteins S7 and S18. Binds to IF-3.

Functionally, located on the platform of the 30S subunit, it bridges several disparate RNA helices of the 16S rRNA. Forms part of the Shine-Dalgarno cleft in the 70S ribosome. The sequence is that of Small ribosomal subunit protein uS11 from Azoarcus sp. (strain BH72).